A 301-amino-acid chain; its full sequence is Protein SCO1 homolog, mitochondrial (301 aa).

The N-terminal 67 residues, 1–67 (MAMLVLVPGR…PGYCLGTRPL (67 aa)), are a transit peptide targeting the mitochondrion. The tract at residues 63 to 91 (GTRPLSTARPPPPWSQKGPGDSTRPSKPG) is disordered. The Mitochondrial matrix segment spans residues 68–92 (STARPPPPWSQKGPGDSTRPSKPGP). A helical transmembrane segment spans residues 93–111 (VSWKSLAITFAIGGALLAG). The Mitochondrial intermembrane portion of the chain corresponds to 112 to 301 (MKHVKKEKAE…THMRPYRKKS (190 aa)). The segment at 118 to 131 (EKAEKLEKERQRHI) is important for dimerization. Residues Cys-169, Cys-173, and His-260 each contribute to the Cu cation site. A disulfide bridge links Cys-169 with Cys-173.

This sequence belongs to the SCO1/2 family. Homodimer. Interacts with COA6. Found in a complex with TMEM177, COX20, COA6, MT-CO2/COX2, COX18 and SCO2. Interacts with TMEM177 in a COX20-dependent manner. Interacts with COX20 in a MT-CO2/COX2- and COX18-dependent manner. Interacts with COX16. In terms of tissue distribution, predominantly expressed in tissues characterized by high rates of oxidative phosphorylation (OxPhos), including muscle, heart, and brain.

It is found in the mitochondrion. The protein localises to the mitochondrion inner membrane. Copper metallochaperone essential for the maturation of cytochrome c oxidase subunit II (MT-CO2/COX2). Not required for the synthesis of MT-CO2/COX2 but plays a crucial role in stabilizing MT-CO2/COX2 during its subsequent maturation. Involved in transporting copper to the Cu(A) site on MT-CO2/COX2. Plays an important role in the regulation of copper homeostasis by controlling the abundance and cell membrane localization of copper transporter CTR1. The chain is Protein SCO1 homolog, mitochondrial (SCO1) from Homo sapiens (Human).